Consider the following 184-residue polypeptide: Elongation factor P (184 aa).

This sequence belongs to the elongation factor P family.

The protein localises to the cytoplasm. It participates in protein biosynthesis; polypeptide chain elongation. Involved in peptide bond synthesis. Stimulates efficient translation and peptide-bond synthesis on native or reconstituted 70S ribosomes in vitro. Probably functions indirectly by altering the affinity of the ribosome for aminoacyl-tRNA, thus increasing their reactivity as acceptors for peptidyl transferase. The chain is Elongation factor P from Mycoplasma mycoides subsp. mycoides SC (strain CCUG 32753 / NCTC 10114 / PG1).